We begin with the raw amino-acid sequence, 711 residues long: MLACLTRGNLLDVLQEGFNEQQLQAYVAWVNAQLKKRPSVKPVQDLRQDLRDGVILAYLIEIVGQLALDSDASVDERTDFFLLHSPFKAAGEKLTGVQLSPSNQQEMKSNVERVLQFVASKKIRMHQTSAKDIVEGNLKSIMRLVLALAAHFKPGSSRTVSQGRDSKAPVQSHQPHCATAVAQGAAAALADVCHDVSRSGRDVFRYRQRNASVDGEIENPYWSVRALVQQYEGQQKSPSESSCSSLTSPSPIHSAKSESIITQAEEKADFVIIPSEGIENRTDEPDSPSSRDWRPGSRGTYLEATWEEQLLEQQEHLEKEMEEAKKMISGLQALLLNGSLPEDEQERPVALCEPGVNPEEQLIIIRSRLDQSVEENQDLKKELLKCKQEARNLQGIKDALQQRLTQQDTSVLQLKQELLRANMDKDELHNQNVDLQRKLEERNRLLGEYKKELGQKDRLFQQQQAKLEEALRKLSDASYQQVDLERELEQKDVLLAHCMKGETDEVTNYNSHSSQRNGFVLPVAGRGATTVTHRGPQTSDLQLVRDALRSLRNSFSGHDPQHHTIDSLEQGISSLMERLHVVETQKKQERKVGGRSPRNQASSEYRASWPPNSTLPHSQSSPAVSSTCTKVLYFTDRSLTPFMVNIPKRLGEVTLKDFKAAIDREGNHRYHFKALDPEFGTVKEEVFHDDDAIPGWEGKIVAWVEEDHREN.

Residue Leu2 is the site of N-myristoyl glycine attachment. Residue Val13 is modified to Phosphoserine. Residues 20–153 (EQQLQAYVAW…LVLALAAHFK (134 aa)) form the Calponin-homology (CH) domain. The actin-binding stretch occupies residues 153-326 (KPGSSRTVSQ…LEKEMEEAKK (174 aa)). Phosphoserine is present on Ser212. Disordered regions lie at residues 233 to 258 (GQQK…AKSE), 271 to 298 (VIIP…PGSR), and 584 to 623 (TQKK…SSPA). Residues 237-254 (SPSESSCSSLTSPSPIHS) are compositionally biased toward low complexity. Ser257 carries the phosphoserine modification. Basic and acidic residues predominate over residues 278-295 (IENRTDEPDSPSSRDWRP). A coiled-coil region spans residues 279–452 (ENRTDEPDSP…NRLLGEYKKE (174 aa)). Residues 597 to 623 (PRNQASSEYRASWPPNSTLPHSQSSPA) are compositionally biased toward polar residues. A DIX domain is found at 600–680 (QASSEYRASW…HFKALDPEFG (81 aa)). Ser618 is modified (phosphoserine).

It belongs to the DIXDC1 family. As to quaternary structure, may bind filamentous actin. Directly interacts (via DIX domain) with DVL2 (via DIX domain). Interacts with gamma-tubulin. Interacts with the complex composed of DVL2 and Rac. Interacts with AXIN1; competes with MAP3K1. Interacts with MAP3K4 preventing MAP3K4 interaction with AXIN1. Post-translationally, phosphorylated on tyrosine and serine residues. In terms of processing, polyubiquitinated, leading to its proteasomal degradation. WNT3A signaling increases DIXDC1 protein levels by inhibiting its ubiquitination and subsequent degradation. As to expression, abundantly expressed in brain and testis and to a lower extent in lung, kidney, colon, ovary and urinary bladder. Expressed in brain, liver, testis and spleen (at protein level). Expressed throughout the brain with strong expression in main and accessory olfactory bulbs, cerebral cortex, piriform cortex, hippocampus, habenular nucleus, dorsal thalamus, superior and inferior colliculi and cerebellum.

Its subcellular location is the cell junction. It localises to the focal adhesion. The protein localises to the cytoplasm. It is found in the cytoskeleton. The protein resides in the stress fiber. Positive effector of the Wnt signaling pathway; activates WNT3A signaling via DVL2. Regulates JNK activation by AXIN1 and DVL2. The chain is Dixin (Dixdc1) from Mus musculus (Mouse).